The primary structure comprises 432 residues: Glutamyl-tRNA reductase (432 aa).

Residues Thr55 to Arg58, Ser113, Glu118 to Gln120, and Gln124 contribute to the substrate site. Cys56 (nucleophile) is an active-site residue. Gly193 to Ile198 provides a ligand contact to NADP(+).

Belongs to the glutamyl-tRNA reductase family. Homodimer.

It carries out the reaction (S)-4-amino-5-oxopentanoate + tRNA(Glu) + NADP(+) = L-glutamyl-tRNA(Glu) + NADPH + H(+). The protein operates within porphyrin-containing compound metabolism; protoporphyrin-IX biosynthesis; 5-aminolevulinate from L-glutamyl-tRNA(Glu): step 1/2. In terms of biological role, catalyzes the NADPH-dependent reduction of glutamyl-tRNA(Glu) to glutamate 1-semialdehyde (GSA). This is Glutamyl-tRNA reductase from Paracidovorax citrulli (strain AAC00-1) (Acidovorax citrulli).